The primary structure comprises 366 residues: Transaldolase (366 aa).

Lys140 acts as the Schiff-base intermediate with substrate in catalysis.

Belongs to the transaldolase family. Type 2 subfamily.

It is found in the cytoplasm. It catalyses the reaction D-sedoheptulose 7-phosphate + D-glyceraldehyde 3-phosphate = D-erythrose 4-phosphate + beta-D-fructose 6-phosphate. It functions in the pathway carbohydrate degradation; pentose phosphate pathway; D-glyceraldehyde 3-phosphate and beta-D-fructose 6-phosphate from D-ribose 5-phosphate and D-xylulose 5-phosphate (non-oxidative stage): step 2/3. Functionally, transaldolase is important for the balance of metabolites in the pentose-phosphate pathway. The sequence is that of Transaldolase from Saccharopolyspora erythraea (strain ATCC 11635 / DSM 40517 / JCM 4748 / NBRC 13426 / NCIMB 8594 / NRRL 2338).